A 492-amino-acid polypeptide reads, in one-letter code: Argininosuccinate lyase (492 aa).

This sequence belongs to the lyase 1 family. Argininosuccinate lyase subfamily.

It localises to the cytoplasm. The enzyme catalyses 2-(N(omega)-L-arginino)succinate = fumarate + L-arginine. It participates in amino-acid biosynthesis; L-arginine biosynthesis; L-arginine from L-ornithine and carbamoyl phosphate: step 3/3. In Methanocorpusculum labreanum (strain ATCC 43576 / DSM 4855 / Z), this protein is Argininosuccinate lyase.